The following is a 310-amino-acid chain: Methionyl-tRNA formyltransferase (310 aa).

A (6S)-5,6,7,8-tetrahydrofolate-binding site is contributed by 109–112 (SLLP).

Belongs to the Fmt family.

The catalysed reaction is L-methionyl-tRNA(fMet) + (6R)-10-formyltetrahydrofolate = N-formyl-L-methionyl-tRNA(fMet) + (6S)-5,6,7,8-tetrahydrofolate + H(+). In terms of biological role, attaches a formyl group to the free amino group of methionyl-tRNA(fMet). The formyl group appears to play a dual role in the initiator identity of N-formylmethionyl-tRNA by promoting its recognition by IF2 and preventing the misappropriation of this tRNA by the elongation apparatus. The protein is Methionyl-tRNA formyltransferase of Pseudomonas putida (strain GB-1).